Consider the following 510-residue polypeptide: Coatomer subunit delta (510 aa).

Residues 270–510 (MESVHMKIEE…TFLVDKYEIL (241 aa)) form the MHD domain.

This sequence belongs to the adaptor complexes medium subunit family. Delta-COP subfamily. As to quaternary structure, oligomeric complex that consists of at least the alpha, beta, beta', gamma, delta, epsilon and zeta subunits.

Its subcellular location is the cytoplasm. The protein localises to the golgi apparatus membrane. It is found in the cytoplasmic vesicle. It localises to the COPI-coated vesicle membrane. In terms of biological role, the coatomer is a cytosolic protein complex that binds to dilysine motifs and reversibly associates with Golgi non-clathrin-coated vesicles, which further mediate biosynthetic protein transport from the ER, via the Golgi up to the trans Golgi network. Coatomer complex is required for budding from Golgi membranes, and is essential for the retrograde Golgi-to-ER transport of dilysine-tagged proteins. In mammals, the coatomer can only be recruited by membranes associated to ADP-ribosylation factors (ARFs), which are small GTP-binding proteins; the complex also influences the Golgi structural integrity, as well as the processing, activity, and endocytic recycling of LDL receptors. This is Coatomer subunit delta (ARCN1) from Gallus gallus (Chicken).